The primary structure comprises 618 residues: Matrix metalloproteinase-24 (618 aa).

An N-terminal signal peptide occupies residues 1 to 41 (MPRSRGGRAAPGQASRWSGWRAPGRLLPLLPALCCLAAAAG). A propeptide spanning residues 42 to 128 (AGKPAGADAP…HLSRRRRNKR (87 aa)) is cleaved from the precursor. Topologically, residues 42–575 (AGKPAGADAP…IDDVPGSVNA (534 aa)) are extracellular. Residues 110-117 (PRCGVPDH) carry the Cysteine switch motif. Positions 112 and 255 each coordinate Zn(2+). Glu-256 is a catalytic residue. His-259 and His-265 together coordinate Zn(2+). Residues 296–352 (QKIYGPPAEPLEPTRPLPTLPVRRIHSPSERKHERHPRPPRPPLGDRPSTPGAKPNI) form a disordered region. Pro residues predominate over residues 302–314 (PAEPLEPTRPLPT). Hemopexin repeat units follow at residues 350–398 (PNIC…WKGL), 399–444 (PARI…GSCL), 446–494 (REGI…KGIP), and 495–542 (QAPQ…WMGC). Cys-353 and Cys-542 are joined by a disulfide. Residues 576–596 (VAVVVPCTLSLCLLVLLYTIF) form a helical membrane-spanning segment. Residues 597 to 618 (QFKNKAGPQPVTYYKRPVQEWV) are Cytoplasmic-facing. Residues 616-618 (EWV) carry the PDZ-binding motif.

The protein belongs to the peptidase M10A family. Interacts with GRIP1 and GRIP2. Interacts (via PDZ-binding motif) with APBA3 (via PDZ domain). The cofactor is Zn(2+). It depends on Ca(2+) as a cofactor. In terms of processing, cleaved by a furin endopeptidase in the trans-Golgi network. In terms of tissue distribution, mainly expressed in neuronal cells of both central and peripheral nervous systems. Expressed by CGRP-containing peptidergic nociceptors in dorsal root ganglia. Expressed in adult neural stem cell and ependymocytes. Expressed at low level in testis.

It is found in the cell membrane. Its subcellular location is the golgi apparatus. It localises to the trans-Golgi network membrane. The protein localises to the secreted. The protein resides in the extracellular space. It is found in the extracellular matrix. Metalloprotease that mediates cleavage of N-cadherin (CDH2) and acts as a regulator of neuro-immune interactions and neural stem cell quiescence. Involved in cell-cell interactions between nociceptive neurites and mast cells, possibly by mediating cleavage of CDH2, thereby acting as a mediator of peripheral thermal nociception and inflammatory hyperalgesia. Key regulator of neural stem cells quiescence by mediating cleavage of CDH2, affecting CDH2-mediated anchorage of neural stem cells to ependymocytes in the adult subependymal zone, leading to modulate their quiescence. May play a role in axonal growth. Able to activate progelatinase A. May also be a proteoglycanase involved in degradation of proteoglycans, such as dermatan sulfate and chondroitin sulfate proteoglycans. Cleaves partially fibronectin, but not collagen type I, nor laminin. In Mus musculus (Mouse), this protein is Matrix metalloproteinase-24 (Mmp24).